Reading from the N-terminus, the 418-residue chain is Histidine--tRNA ligase (418 aa).

The protein belongs to the class-II aminoacyl-tRNA synthetase family. As to quaternary structure, homodimer.

The protein resides in the cytoplasm. The enzyme catalyses tRNA(His) + L-histidine + ATP = L-histidyl-tRNA(His) + AMP + diphosphate + H(+). This chain is Histidine--tRNA ligase, found in Dehalococcoides mccartyi (strain ATCC BAA-2266 / KCTC 15142 / 195) (Dehalococcoides ethenogenes (strain 195)).